Consider the following 741-residue polypeptide: MEANFVSSALAGVQNNRSVKRSLDRLKSLFSSGQHQLNGSLGKKVFILLALGGGAFSLVKFYKAKNEGSSKQSGLIIDLKDKNSKKDKKRNVTRVDAVFFRRLAKIIRIVIPSLKSKEFLSLLYLTALLFARTMLSVSIAEIAGKNAQNLVARKWKEMRNGVLKFALVSIPASFVNASLKYETDMLALRFRKRLSEYVHKEYLEGVNFYKASHLGGADRIDNADQRVTSDIEQFCNSMSSLYTTLFKPFLDLVLFTRKLVVVMGWGSPLLMFSYFIVSGFLKKLIMPPFGRLTAKQSELEGNYRTVHQRLITNAEEIAFYDGSRKERQIINLSFGDIYNHTGYVSYLKCLVGIFDGFLVKYCASIVGYGCMVLPIYTGIRGSSGKDSTELTKDYIRNTQLMVALSQAIGQLVLLGNKVTLMAGYTSRVSELLEMIKSIKERGTSQFTIVHEDDVPNPLTNSPVNDKYDTSVDMSSWLEDWRKRSDQTRIVKRQQSNRSSASGATTVYGGGTFVEGDFIKFENVSIVSPEGKLLVENLDFQVMPNQNVMITGPNGSGKSSLFRILGELWPLHCGTVIKPRKEDILFVPQKPYLVLGTLRDQIIYPHSHDDMKKLGVTDDDLQHLLATVDPNLTIIRQWNWDDTKDWFTALSGGQKQRIAMARLFYHRPQYAILDECTSAVSDEVEGKIYETCKKLGITLFTVSHRPQLRAYHDYVLLFNGRGGWEWSKIDHDDDHLKKPLSH.

3 helical membrane-spanning segments follow: residues 39–59 (GSLGKKVFILLALGGGAFSLV), 119–139 (FLSLLYLTALLFARTMLSVSI), and 260–280 (VVVMGWGSPLLMFSYFIVSGF). The ABC transmembrane type-1 domain occupies 131–409 (ARTMLSVSIA…LMVALSQAIG (279 aa)). The 223-residue stretch at 518 to 740 (IKFENVSIVS…DDDHLKKPLS (223 aa)) folds into the ABC transporter domain. 551 to 558 (GPNGSGKS) is an ATP binding site.

It belongs to the ABC transporter superfamily. ABCD family. Peroxisomal fatty acyl CoA transporter (TC 3.A.1.203) subfamily.

The protein resides in the membrane. This chain is ABC transporter D family member 2 (abcD2), found in Dictyostelium discoideum (Social amoeba).